A 395-amino-acid chain; its full sequence is Elongation factor Tu (395 aa).

The tr-type G domain occupies 10–204; it reads LPHVNIGTIG…AVDEYIPTPQ (195 aa). The interval 19-26 is G1; the sequence is GHVDHGKT. Position 19 to 26 (19 to 26) interacts with GTP; the sequence is GHVDHGKT. A Mg(2+)-binding site is contributed by Thr26. The segment at 60-64 is G2; it reads GITIN. A G3 region spans residues 81–84; that stretch reads DCPG. GTP is bound by residues 81-85 and 136-139; these read DCPGH and NKCD. Positions 136–139 are G4; that stretch reads NKCD. The G5 stretch occupies residues 174–176; it reads SAL.

It belongs to the TRAFAC class translation factor GTPase superfamily. Classic translation factor GTPase family. EF-Tu/EF-1A subfamily. In terms of assembly, monomer.

It is found in the cytoplasm. The enzyme catalyses GTP + H2O = GDP + phosphate + H(+). Its function is as follows. GTP hydrolase that promotes the GTP-dependent binding of aminoacyl-tRNA to the A-site of ribosomes during protein biosynthesis. The sequence is that of Elongation factor Tu from Mycoplasma capricolum subsp. capricolum (strain California kid / ATCC 27343 / NCTC 10154).